The primary structure comprises 265 residues: Tryptophan synthase alpha chain (265 aa).

Active-site proton acceptor residues include glutamate 49 and aspartate 60.

The protein belongs to the TrpA family. Tetramer of two alpha and two beta chains.

The catalysed reaction is (1S,2R)-1-C-(indol-3-yl)glycerol 3-phosphate + L-serine = D-glyceraldehyde 3-phosphate + L-tryptophan + H2O. The protein operates within amino-acid biosynthesis; L-tryptophan biosynthesis; L-tryptophan from chorismate: step 5/5. In terms of biological role, the alpha subunit is responsible for the aldol cleavage of indoleglycerol phosphate to indole and glyceraldehyde 3-phosphate. This chain is Tryptophan synthase alpha chain, found in Desulfatibacillum aliphaticivorans.